The primary structure comprises 208 residues: Small ribosomal subunit protein eS8 (208 aa).

The tract at residues 1–27 (MGISRDNWHKRRKTGGKRKPYHKKRKY) is disordered. Gly-2 carries N-myristoyl glycine lipidation. Residues 8 to 26 (WHKRRKTGGKRKPYHKKRK) show a composition bias toward basic residues. 2 positions are modified to N6-acetyllysine: Lys-37 and Lys-128. Position 130 is a phosphothreonine (Thr-130). At Ser-160 the chain carries Phosphoserine. Glycyl lysine isopeptide (Lys-Gly) (interchain with G-Cter in SUMO2) cross-links involve residues Lys-170 and Lys-193.

This sequence belongs to the eukaryotic ribosomal protein eS8 family. Component of the small ribosomal subunit. Identified in a IGF2BP1-dependent mRNP granule complex containing untranslated mRNAs. Part of the small subunit (SSU) processome, composed of more than 70 proteins and the RNA chaperone small nucleolar RNA (snoRNA) U3.

It localises to the cytoplasm. Its subcellular location is the membrane. It is found in the nucleus. The protein resides in the nucleolus. Component of the small ribosomal subunit. The ribosome is a large ribonucleoprotein complex responsible for the synthesis of proteins in the cell. Part of the small subunit (SSU) processome, first precursor of the small eukaryotic ribosomal subunit. During the assembly of the SSU processome in the nucleolus, many ribosome biogenesis factors, an RNA chaperone and ribosomal proteins associate with the nascent pre-rRNA and work in concert to generate RNA folding, modifications, rearrangements and cleavage as well as targeted degradation of pre-ribosomal RNA by the RNA exosome. The protein is Small ribosomal subunit protein eS8 (RPS8) of Oryctolagus cuniculus (Rabbit).